The chain runs to 382 residues: Carbamoyl phosphate synthase small chain (382 aa).

The segment at 1 to 189 (MIKSALLVLE…GLPEAKKEDE (189 aa)) is CPSase. Residues Ser47, Gly241, and Gly243 each contribute to the L-glutamine site. The 188-residue stretch at 193-380 (HVVAYDFGAK…IALIEQYRKT (188 aa)) folds into the Glutamine amidotransferase type-1 domain. Cys269 acts as the Nucleophile in catalysis. The L-glutamine site is built by Leu270, Gln273, Asn311, Gly313, and Phe314. Residues His353 and Glu355 contribute to the active site.

This sequence belongs to the CarA family. As to quaternary structure, composed of two chains; the small (or glutamine) chain promotes the hydrolysis of glutamine to ammonia, which is used by the large (or ammonia) chain to synthesize carbamoyl phosphate. Tetramer of heterodimers (alpha,beta)4.

It carries out the reaction hydrogencarbonate + L-glutamine + 2 ATP + H2O = carbamoyl phosphate + L-glutamate + 2 ADP + phosphate + 2 H(+). The enzyme catalyses L-glutamine + H2O = L-glutamate + NH4(+). It participates in amino-acid biosynthesis; L-arginine biosynthesis; carbamoyl phosphate from bicarbonate: step 1/1. It functions in the pathway pyrimidine metabolism; UMP biosynthesis via de novo pathway; (S)-dihydroorotate from bicarbonate: step 1/3. Small subunit of the glutamine-dependent carbamoyl phosphate synthetase (CPSase). CPSase catalyzes the formation of carbamoyl phosphate from the ammonia moiety of glutamine, carbonate, and phosphate donated by ATP, constituting the first step of 2 biosynthetic pathways, one leading to arginine and/or urea and the other to pyrimidine nucleotides. The small subunit (glutamine amidotransferase) binds and cleaves glutamine to supply the large subunit with the substrate ammonia. This Escherichia coli O6:H1 (strain CFT073 / ATCC 700928 / UPEC) protein is Carbamoyl phosphate synthase small chain.